Consider the following 180-residue polypeptide: Shikimate kinase (180 aa).

14–19 (GAGKST) serves as a coordination point for ATP. Position 18 (S18) interacts with Mg(2+). D36, R60, and G82 together coordinate substrate. ATP is bound at residue R120. R140 contributes to the substrate binding site. Q157 provides a ligand contact to ATP.

This sequence belongs to the shikimate kinase family. Monomer. Mg(2+) serves as cofactor.

The protein localises to the cytoplasm. The enzyme catalyses shikimate + ATP = 3-phosphoshikimate + ADP + H(+). It functions in the pathway metabolic intermediate biosynthesis; chorismate biosynthesis; chorismate from D-erythrose 4-phosphate and phosphoenolpyruvate: step 5/7. Catalyzes the specific phosphorylation of the 3-hydroxyl group of shikimic acid using ATP as a cosubstrate. This Haemophilus influenzae (strain PittEE) protein is Shikimate kinase.